Consider the following 919-residue polypeptide: Probable dipeptidyl-aminopeptidase B (919 aa).

Residues 1–10 (MRRSDGHEET) are compositionally biased toward basic and acidic residues. The interval 1–53 (MRRSDGHEETSEFLPMTHSRSVSAASQTSTDSSLSTESLFPREQKPFPNAMGG) is disordered. Topologically, residues 1–92 (MRRSDGHEET…AATGGGRARR (92 aa)) are cytoplasmic. The span at 21 to 38 (SVSAASQTSTDSSLSTES) shows a compositional bias: low complexity. A helical; Signal-anchor for type II membrane protein transmembrane segment spans residues 93 to 113 (IFWILVLLCLGGWLLAFVLFL). Residues 114-919 (TGGRANYQTA…MKRSLRLLSP (806 aa)) are Vacuolar-facing. Residues N200, N352, and N643 are each glycosylated (N-linked (GlcNAc...) asparagine). S757 acts as the Charge relay system in catalysis. An N-linked (GlcNAc...) asparagine glycan is attached at N811. Active-site charge relay system residues include D834 and H867.

The protein belongs to the peptidase S9B family.

It is found in the vacuole membrane. The catalysed reaction is Release of an N-terminal dipeptide, Xaa-Yaa-|-Zaa-, from a polypeptide, preferentially when Yaa is Pro, provided Zaa is neither Pro nor hydroxyproline.. In terms of biological role, type IV dipeptidyl-peptidase which removes N-terminal dipeptides sequentially from polypeptides having unsubstituted N-termini provided that the penultimate residue is proline. The protein is Probable dipeptidyl-aminopeptidase B (dapB) of Aspergillus fumigatus (strain CBS 144.89 / FGSC A1163 / CEA10) (Neosartorya fumigata).